Here is a 444-residue protein sequence, read N- to C-terminus: 23S rRNA (uracil(1939)-C(5))-methyltransferase RlmD (444 aa).

The TRAM domain maps to 5–64 (KPKLNLTSQTARIVNLSHDGRGIARVNGKATFIQGALPGEVVEFQYTRVKKDFDEGKLLS). 4 residues coordinate [4Fe-4S] cluster: cysteine 77, cysteine 83, cysteine 86, and cysteine 166. 6 residues coordinate S-adenosyl-L-methionine: glutamine 276, phenylalanine 305, asparagine 310, glutamate 326, asparagine 353, and aspartate 374. Catalysis depends on cysteine 400, which acts as the Nucleophile.

Belongs to the class I-like SAM-binding methyltransferase superfamily. RNA M5U methyltransferase family. RlmD subfamily.

It catalyses the reaction uridine(1939) in 23S rRNA + S-adenosyl-L-methionine = 5-methyluridine(1939) in 23S rRNA + S-adenosyl-L-homocysteine + H(+). Functionally, catalyzes the formation of 5-methyl-uridine at position 1939 (m5U1939) in 23S rRNA. This is 23S rRNA (uracil(1939)-C(5))-methyltransferase RlmD from Legionella pneumophila (strain Paris).